A 394-amino-acid chain; its full sequence is Protein TsgA homolog (394 aa).

A run of 12 helical transmembrane segments spans residues 11–31 (WISY…GIVM), 51–71 (FLNA…EIIP), 76–96 (LVFG…GHNL), 101–121 (ISMF…TFLV), 134–154 (LLFT…AAAM), 162–182 (WYWV…LTLC), 206–226 (VGVL…LGFI), 246–266 (QLVS…SFIL), 274–294 (IVTV…STDN), 302–322 (ILAL…LGSL), 334–354 (FILT…GPIV), and 363–383 (LETA…LGFF).

The protein belongs to the major facilitator superfamily. TsgA family.

Its subcellular location is the cell inner membrane. The chain is Protein TsgA homolog from Yersinia pestis bv. Antiqua (strain Antiqua).